The primary structure comprises 210 residues: FMN-dependent NADH:quinone oxidoreductase (210 aa).

FMN is bound by residues 17–19 (SCS) and 148–151 (SSGG).

Belongs to the azoreductase type 1 family. As to quaternary structure, homodimer. FMN serves as cofactor.

The catalysed reaction is 2 a quinone + NADH + H(+) = 2 a 1,4-benzosemiquinone + NAD(+). The enzyme catalyses N,N-dimethyl-1,4-phenylenediamine + anthranilate + 2 NAD(+) = 2-(4-dimethylaminophenyl)diazenylbenzoate + 2 NADH + 2 H(+). Functionally, quinone reductase that provides resistance to thiol-specific stress caused by electrophilic quinones. Also exhibits azoreductase activity. Catalyzes the reductive cleavage of the azo bond in aromatic azo compounds to the corresponding amines. This Geotalea uraniireducens (strain Rf4) (Geobacter uraniireducens) protein is FMN-dependent NADH:quinone oxidoreductase.